The chain runs to 307 residues: Ribosomal RNA small subunit methyltransferase H (307 aa).

Residues 33–35, Asp-51, Phe-78, Asp-96, and Gln-103 each bind S-adenosyl-L-methionine; that span reads GGY.

This sequence belongs to the methyltransferase superfamily. RsmH family.

It localises to the cytoplasm. It carries out the reaction cytidine(1402) in 16S rRNA + S-adenosyl-L-methionine = N(4)-methylcytidine(1402) in 16S rRNA + S-adenosyl-L-homocysteine + H(+). Specifically methylates the N4 position of cytidine in position 1402 (C1402) of 16S rRNA. This Rickettsia conorii (strain ATCC VR-613 / Malish 7) protein is Ribosomal RNA small subunit methyltransferase H.